Reading from the N-terminus, the 217-residue chain is Adenylate kinase (217 aa).

G10–T15 serves as a coordination point for ATP. Residues S30–V59 are NMP. Residues T31, R36, G57–V59, G85–R88, and Q92 contribute to the AMP site. The tract at residues G122 to D159 is LID. ATP is bound by residues R123 and T132–Y133. AMP-binding residues include R156 and R167. G203 contacts ATP.

This sequence belongs to the adenylate kinase family. Monomer.

It is found in the cytoplasm. The catalysed reaction is AMP + ATP = 2 ADP. The protein operates within purine metabolism; AMP biosynthesis via salvage pathway; AMP from ADP: step 1/1. Its function is as follows. Catalyzes the reversible transfer of the terminal phosphate group between ATP and AMP. Plays an important role in cellular energy homeostasis and in adenine nucleotide metabolism. This Methylibium petroleiphilum (strain ATCC BAA-1232 / LMG 22953 / PM1) protein is Adenylate kinase.